A 103-amino-acid chain; its full sequence is Large ribosomal subunit protein bL21 (103 aa).

Belongs to the bacterial ribosomal protein bL21 family. Part of the 50S ribosomal subunit. Contacts protein L20.

Its function is as follows. This protein binds to 23S rRNA in the presence of protein L20. This is Large ribosomal subunit protein bL21 from Vibrio cholerae serotype O1 (strain ATCC 39541 / Classical Ogawa 395 / O395).